A 406-amino-acid polypeptide reads, in one-letter code: Indole-3-pyruvate monooxygenase YUCCA1 (406 aa).

21 to 26 (GAGPSG) provides a ligand contact to FAD. NADP(+) is bound at residue 184–189 (GCGNSG).

The protein belongs to the FMO family. It depends on FAD as a cofactor. Expressed in coleoptile tips, root tips, leaf blade tips, shoot apical meristem, vasculature of stems and flowers.

The enzyme catalyses indole-3-pyruvate + NADPH + O2 + H(+) = (indol-3-yl)acetate + CO2 + NADP(+) + H2O. In terms of biological role, involved in auxin biosynthesis. Converts the indole-3-pyruvic acid (IPA) produced by the TAA family to indole-3-acetic acid (IAA). Functions downstream of TAR2 in auxin biosynthesis. Functions upstream of WOX11, a transcription factor that promotes the development of crown roots. This Oryza sativa subsp. japonica (Rice) protein is Indole-3-pyruvate monooxygenase YUCCA1.